The primary structure comprises 177 residues: Large ribosomal subunit protein uL6 (177 aa).

This sequence belongs to the universal ribosomal protein uL6 family. In terms of assembly, part of the 50S ribosomal subunit.

This protein binds to the 23S rRNA, and is important in its secondary structure. It is located near the subunit interface in the base of the L7/L12 stalk, and near the tRNA binding site of the peptidyltransferase center. The sequence is that of Large ribosomal subunit protein uL6 from Leptothrix cholodnii (strain ATCC 51168 / LMG 8142 / SP-6) (Leptothrix discophora (strain SP-6)).